The following is a 2042-amino-acid chain: Cell adhesion molecule DSCAML1 (2042 aa).

The signal sequence occupies residues 1–17 (MWLVTFFLLYSLRKAHT). Over 18–1592 (EDVGTSLYFV…AQGEGDDVKK (1575 aa)) the chain is Extracellular. N28 and N78 each carry an N-linked (GlcNAc...) asparagine glycan. Ig-like C2-type domains follow at residues 37 to 107 (SSTV…AENS), 114 to 216 (PNIR…ARLS), 227 to 311 (PTML…GTLT), 315 to 403 (PLRV…SIIT), 409 to 502 (PRIV…ARIN), 507 to 587 (PSIR…LSIS), 597 to 686 (PPLI…RQLI), 691 to 785 (PRFV…MFLT), and 789 to 886 (PAMI…LTVQ). 5 disulfide bridges follow: C46–C102, C145–C197, C248–C295, C337–C387, and C430–C486. Residues N369, N472, N514, N557, N667, N711, N750, N797, and N810 are each glycosylated (N-linked (GlcNAc...) asparagine). Disulfide bonds link C527/C576 and C618/C670. C712 and C768 are disulfide-bonded. A disulfide bridge links C811 with C868. 4 consecutive Fibronectin type-III domains span residues 888–985 (PPDP…TEEA), 990–1089 (PPMD…TLED), 1094–1190 (PPEN…TKED), and 1194–1289 (PPAG…AGKA). Residues N927, N1083, N1145, N1163, N1276, and N1346 are each glycosylated (N-linked (GlcNAc...) asparagine). Positions 1279–1368 (EKVTIEPAGK…SGYYTCTATN (90 aa)) constitute an Ig-like C2-type 10 domain. C1312 and C1364 are oxidised to a cystine. 2 Fibronectin type-III domains span residues 1384 to 1478 (PPDQ…THGR) and 1479 to 1579 (EPSF…TIPP). N-linked (GlcNAc...) asparagine glycosylation is found at N1493, N1532, and N1562. Residues 1593–1613 (LFTIACPIILATLGVALLFII) traverse the membrane as a helical segment. At 1614 to 2042 (RKKRKEKRLK…GAYSKSYTLV (429 aa)) the chain is on the cytoplasmic side. Disordered stretches follow at residues 1716–1742 (PLID…HSTR), 1781–1805 (SDSY…TESA), 1841–1865 (SSDQ…PSEP), and 1940–2042 (PPAR…YTLV). Residues 1733 to 1742 (KSVKSAHSTR) show a composition bias toward basic residues. 2 stretches are compositionally biased toward polar residues: residues 1781 to 1790 (SDSYSASLSQ) and 1841 to 1863 (SSDQ…STPS). Positions 1951–1960 (AKPPGLPPPS) are enriched in pro residues. The segment covering 1961-1983 (SSSSSTTLPQRTLPMPTAASTAP) has biased composition (low complexity). The span at 1984–1995 (APAPAPAAPAEP) shows a compositional bias: pro residues. Low complexity-rich tracts occupy residues 1996–2005 (PANTTTTTTT) and 2023–2034 (GAGRAQKQGAGA).

Homodimer; mediates homophilic interactions to promote cell adhesion. In terms of tissue distribution, SDK1, SDK2, DSCAM and DSCAML1 are expressed in non-overlapping subsets of interneurons and retinal ganglion cells (RGCs) that form synapses in distinct inner plexiform layer (IPL) sublaminae.

The protein resides in the cell membrane. It is found in the synapse. Its function is as follows. Cell adhesion molecule that plays a role in neuronal self-avoidance. Promotes repulsion between specific neuronal processes of either the same cell or the same subtype of cells. Adhesion molecule that promotes lamina-specific synaptic connections in the retina: expressed in specific subsets of interneurons and retinal ganglion cells (RGCs) and promotes synaptic connectivity via homophilic interactions. The sequence is that of Cell adhesion molecule DSCAML1 (DSCAML1) from Gallus gallus (Chicken).